A 598-amino-acid polypeptide reads, in one-letter code: Aspartate--tRNA(Asp/Asn) ligase (598 aa).

Glu-174 contacts L-aspartate. Residues 198–201 (QQLK) form an aspartate region. L-aspartate is bound at residue Arg-220. ATP is bound by residues 220–222 (RDE) and Gln-229. His-458 is an L-aspartate binding site. Glu-492 provides a ligand contact to ATP. Arg-499 contacts L-aspartate. 544 to 547 (GIDR) provides a ligand contact to ATP.

It belongs to the class-II aminoacyl-tRNA synthetase family. Type 1 subfamily. As to quaternary structure, homodimer.

The protein localises to the cytoplasm. It catalyses the reaction tRNA(Asx) + L-aspartate + ATP = L-aspartyl-tRNA(Asx) + AMP + diphosphate. Functionally, aspartyl-tRNA synthetase with relaxed tRNA specificity since it is able to aspartylate not only its cognate tRNA(Asp) but also tRNA(Asn). Reaction proceeds in two steps: L-aspartate is first activated by ATP to form Asp-AMP and then transferred to the acceptor end of tRNA(Asp/Asn). This Dehalococcoides mccartyi (strain ATCC BAA-2266 / KCTC 15142 / 195) (Dehalococcoides ethenogenes (strain 195)) protein is Aspartate--tRNA(Asp/Asn) ligase.